Consider the following 213-residue polypeptide: Inactive ribonuclease-like protein 10 (213 aa).

The signal sequence occupies residues 1 to 24; sequence MKLTLVQFFFMMLLLLLGLGVGLG. N-linked (GlcNAc...) asparagine glycosylation is present at Asn128.

Belongs to the pancreatic ribonuclease family. In terms of processing, the N-terminus is blocked. Glycosylated. In terms of tissue distribution, male-specific expression in proximal caput of the epididymis.

The protein resides in the secreted. In terms of biological role, secreted proximal epididymal protein required for post-testicular sperm maturation and male fertility. May be involved in sperm adhesion to the egg zona pellucida. Does not have ribonuclease activity. The sequence is that of Inactive ribonuclease-like protein 10 (RNASE10) from Sus scrofa (Pig).